A 159-amino-acid polypeptide reads, in one-letter code: 2-C-methyl-D-erythritol 2,4-cyclodiphosphate synthase (159 aa).

2 residues coordinate a divalent metal cation: aspartate 10 and histidine 12. 4-CDP-2-C-methyl-D-erythritol 2-phosphate-binding positions include 10–12 and 37–38; these read DVH and HS. Histidine 45 provides a ligand contact to a divalent metal cation. Residues 59–61, 64–68, 103–109, 135–138, phenylalanine 142, and arginine 145 each bind 4-CDP-2-C-methyl-D-erythritol 2-phosphate; these read DIG, FLDTD, AQAPKML, and TTTE.

Belongs to the IspF family. Homotrimer. A divalent metal cation serves as cofactor.

The catalysed reaction is 4-CDP-2-C-methyl-D-erythritol 2-phosphate = 2-C-methyl-D-erythritol 2,4-cyclic diphosphate + CMP. The protein operates within isoprenoid biosynthesis; isopentenyl diphosphate biosynthesis via DXP pathway; isopentenyl diphosphate from 1-deoxy-D-xylulose 5-phosphate: step 4/6. Its function is as follows. Involved in the biosynthesis of isopentenyl diphosphate (IPP) and dimethylallyl diphosphate (DMAPP), two major building blocks of isoprenoid compounds. Catalyzes the conversion of 4-diphosphocytidyl-2-C-methyl-D-erythritol 2-phosphate (CDP-ME2P) to 2-C-methyl-D-erythritol 2,4-cyclodiphosphate (ME-CPP) with a corresponding release of cytidine 5-monophosphate (CMP). The polypeptide is 2-C-methyl-D-erythritol 2,4-cyclodiphosphate synthase (Francisella tularensis subsp. holarctica (strain OSU18)).